The chain runs to 398 residues: GATA transcription factor 21 (398 aa).

The interval 20–51 (QPFFYPLGSSSSLHHHHHHHHHQVPSNSSSSS) is disordered. Residues 32-42 (LHHHHHHHHHQ) are compositionally biased toward basic residues. The Nuclear localization signal motif lies at 109–116 (PKKETRLK). The segment at 122–144 (KDHEDQPHPLHQNPTKPDSDSDK) is disordered. The GATA-type zinc-finger motif lies at 226-280 (NGVIRVCSDCNTTKTPLWRSGPRGPKSLCNACGIRQRKARRAAMAAAAAAGDQEV). A disordered region spans residues 289–353 (LPLKKKLQNK…KSTTSSNSSI (65 aa)). A compositionally biased stretch (basic residues) spans 291-302 (LKKKLQNKKKRS). The span at 343 to 353 (SKSTTSSNSSI) shows a compositional bias: low complexity.

Belongs to the type IV zinc-finger family. Class B subfamily. In terms of assembly, interacts with SNL1. Forms heterodimers with GATA18. In terms of tissue distribution, expressed predominantly in leaves, and barely in stems, flowers and siliques.

It localises to the nucleus. In terms of biological role, transcriptional regulator that specifically binds 5'-GATA-3' or 5'-GAT-3' motifs within gene promoters. Involved in the modulation of chloroplast development, growth and division in a cytokinin-dependent manner. Repressor of the gibberellic acid (GA) signaling pathway that represses flowering and modulates greening, in a SOC1-dependent manner. Prevents the accumulation of SOC1 during flowering. Promotes chlorophyll biosynthesis throughout the plant, by regulating chlorophyll biosynthetic genes (e.g. HEMA1 and GUN4) and chloroplast localized glutamate synthase (e.g. GLU1). Involved in the regulation of sugar-sensing genes (e.g. HXK1, HXK2, STP13 and PLT6). Regulator of germination, senescence, elongation growth and flowering time. Also influences leaf starch content. The protein is GATA transcription factor 21 of Arabidopsis thaliana (Mouse-ear cress).